The following is a 167-amino-acid chain: Putative pre-16S rRNA nuclease (167 aa).

It belongs to the YqgF nuclease family.

It is found in the cytoplasm. In terms of biological role, could be a nuclease involved in processing of the 5'-end of pre-16S rRNA. This Streptomyces coelicolor (strain ATCC BAA-471 / A3(2) / M145) protein is Putative pre-16S rRNA nuclease.